The following is a 1547-amino-acid chain: Transposon Ty3-G Gag-Pol polyprotein (1547 aa).

S2 carries the post-translational modification N-acetylserine. The segment at R265–A282 adopts a CCHC-type zinc-finger fold. The active-site For protease activity; shared with dimeric partner is D336. The region spanning L620–I797 is the Reverse transcriptase domain. Residues D686, D748, D749, D893, E936, and D961 each contribute to the Mg(2+) site. Positions D893–Y1011 constitute an RNase H Ty3/gyspy-type domain. Residues H1106 to C1145 form an integrase-type zinc finger-like region. The Integrase catalytic domain occupies L1159–L1324. Mg(2+) is bound by residues D1175 and D1236.

In terms of assembly, the protease is a homodimer, whose active site consists of two apposed aspartic acid residues. In terms of processing, initially, virus-like particles (VLPs) are composed of the structural unprocessed proteins Gag and Gag-Pol, and also contain the host initiator methionine tRNA (tRNA(i)-Met) which serves as a primer for minus-strand DNA synthesis, and a dimer of genomic Ty RNA. Processing of the polyproteins occurs within the particle and proceeds by an ordered pathway, called maturation. First, the protease (PR) is released by autocatalytic cleavage of the Gag-Pol polyprotein, and this cleavage is a prerequisite for subsequent processing at the remaining sites to release the mature structural and catalytic proteins. Maturation takes place prior to the RT reaction and is required to produce transposition-competent VLPs.

The protein localises to the cytoplasm. It localises to the nucleus. It catalyses the reaction DNA(n) + a 2'-deoxyribonucleoside 5'-triphosphate = DNA(n+1) + diphosphate. It carries out the reaction Endonucleolytic cleavage to 5'-phosphomonoester.. Functionally, capsid protein (CA) is the structural component of the virus-like particle (VLP), forming the shell that encapsulates the genomic RNA-nucleocapsid complex. Nucleocapsid protein p11 (NC) forms the nucleocore that coats the retro-elements dimeric RNA. Binds these RNAs through its zinc fingers. Promotes primer tRNA(i)-Met annealing to the multipartite primer-binding site (PBS), dimerization of Ty3 RNA and initiation of reverse transcription. In terms of biological role, the aspartyl protease (PR) mediates the proteolytic cleavages of the Gag and Gag-Pol polyproteins after assembly of the VLP. Its function is as follows. Reverse transcriptase/ribonuclease H (RT) is a multifunctional enzyme that catalyzes the conversion of the retro-elements RNA genome into dsDNA within the VLP. The enzyme displays a DNA polymerase activity that can copy either DNA or RNA templates, and a ribonuclease H (RNase H) activity that cleaves the RNA strand of RNA-DNA heteroduplexes during plus-strand synthesis and hydrolyzes RNA primers. The conversion leads to a linear dsDNA copy of the retrotransposon that includes long terminal repeats (LTRs) at both ends. Functionally, integrase (IN) targets the VLP to the nucleus, where a subparticle preintegration complex (PIC) containing at least integrase and the newly synthesized dsDNA copy of the retrotransposon must transit the nuclear membrane. Once in the nucleus, integrase performs the integration of the dsDNA into the host genome. This is Transposon Ty3-G Gag-Pol polyprotein (TY3B-G) from Saccharomyces cerevisiae (strain ATCC 204508 / S288c) (Baker's yeast).